A 912-amino-acid polypeptide reads, in one-letter code: Serine/threonine-protein kinase D1 (912 aa).

Residue Y95 is modified to Phosphotyrosine. A Phorbol-ester/DAG-type 1 zinc finger spans residues 146 to 196; the sequence is PHALFVHSYRAPAFCDHCGEMLWGLVRQGLKCEGCGLNYHKRCAFKIPNNC. A phosphoserine mark is found at S205, S208, S219, and S223. A Phorbol-ester/DAG-type 2 zinc finger spans residues 270–320; that stretch reads PHTFVIHSYTRPTVCQYCKKLLKGLFRQGLQCKDCRFNCHKRCAPKVPNNC. The residue at position 345 (S345) is a Phosphoserine. A disordered region spans residues 377 to 402; sequence NDSGEMQDPDPDHEDANRTISPSTSN. Residues S397 and S401 each carry the phosphoserine; by MAPK13 modification. Residues 422–541 enclose the PH domain; that stretch reads TVMKEGWMVH…WEIAIQHALM (120 aa). At Y432 the chain carries Phosphotyrosine. S448 carries the phosphoserine modification. Y463 is modified (phosphotyrosine; by ABL). Phosphoserine is present on S473. At Y502 the chain carries Phosphotyrosine. Phosphoserine is present on S548. The region spanning 583-839 is the Protein kinase domain; it reads IFPDEVLGSG…VDKTLSHPWL (257 aa). Residues 589 to 597 and K612 contribute to the ATP site; that span reads LGSGQFGIV. The active-site Proton acceptor is D706. Residue S738 is modified to Phosphoserine; by PKC/PRKCD. Position 742 is a phosphoserine; by autocatalysis and PKC/PRKCD (S742). Residue Y749 is modified to Phosphotyrosine. At S910 the chain carries Phosphoserine; by autocatalysis.

Belongs to the protein kinase superfamily. CAMK Ser/Thr protein kinase family. PKD subfamily. As to quaternary structure, interacts (via N-terminus) with ADAP1/CENTA1. Interacts with MAPK13. Interacts with DAPK1 in an oxidative stress-regulated manner. Interacts with USP28; the interaction induces phosphorylation of USP28 and activated KRAS-mediated stabilization of ZNF304. Interacts with AKAP13 (via C-terminal domain). The cofactor is Mg(2+). Phosphorylated at Ser-397 and Ser-401 by MAPK13 during regulation of insulin secretion in pancreatic beta cells. Phosphorylated by DAPK1. Phosphorylated at Tyr-95 and by ABL at Tyr-463, which primes the kinase in response to oxidative stress, and promotes a second step activating phosphorylation at Ser-738/Ser-742 by PKRD. Phosphorylated on Ser-910 upon S.enterica infection in macrophages.

The protein resides in the cytoplasm. The protein localises to the cell membrane. It localises to the golgi apparatus. Its subcellular location is the trans-Golgi network. The enzyme catalyses L-seryl-[protein] + ATP = O-phospho-L-seryl-[protein] + ADP + H(+). It carries out the reaction L-threonyl-[protein] + ATP = O-phospho-L-threonyl-[protein] + ADP + H(+). Activated by DAG and phorbol esters. Phorbol-ester/DAG-type domain 1 binds DAG with high affinity and appears to play the dominant role in mediating translocation to the cell membrane and trans-Golgi network. Phorbol-ester/DAG-type domain 2 binds phorbol ester with higher affinity. Autophosphorylation of Ser-742 and phosphorylation of Ser-738 by PKC relieves auto-inhibition by the PH domain. Phosphorylation on Tyr-463 by the SRC-ABL1 pathway in response to oxidative stress, is also required for activation. Activated by DAPK1 under oxidative stress. Serine/threonine-protein kinase that converts transient diacylglycerol (DAG) signals into prolonged physiological effects downstream of PKC, and is involved in the regulation of MAPK8/JNK1 and Ras signaling, Golgi membrane integrity and trafficking, cell survival through NF-kappa-B activation, cell migration, cell differentiation by mediating HDAC7 nuclear export, cell proliferation via MAPK1/3 (ERK1/2) signaling, and plays a role in cardiac hypertrophy, VEGFA-induced angiogenesis, genotoxic-induced apoptosis and flagellin-stimulated inflammatory response. Phosphorylates the epidermal growth factor receptor (EGFR) on dual threonine residues, which leads to the suppression of epidermal growth factor (EGF)-induced MAPK8/JNK1 activation and subsequent JUN phosphorylation. Phosphorylates RIN1, inducing RIN1 binding to 14-3-3 proteins YWHAB, YWHAE and YWHAZ and increased competition with RAF1 for binding to GTP-bound form of Ras proteins (NRAS, HRAS and KRAS). Acts downstream of the heterotrimeric G-protein beta/gamma-subunit complex to maintain the structural integrity of the Golgi membranes, and is required for protein transport along the secretory pathway. In the trans-Golgi network (TGN), regulates the fission of transport vesicles that are on their way to the plasma membrane. May act by activating the lipid kinase phosphatidylinositol 4-kinase beta (PI4KB) at the TGN for the local synthesis of phosphorylated inositol lipids, which induces a sequential production of DAG, phosphatidic acid (PA) and lyso-PA (LPA) that are necessary for membrane fission and generation of specific transport carriers to the cell surface. Under oxidative stress, is phosphorylated at Tyr-463 via SRC-ABL1 and contributes to cell survival by activating IKK complex and subsequent nuclear translocation and activation of NFKB1. Involved in cell migration by regulating integrin alpha-5/beta-3 recycling and promoting its recruitment in newly forming focal adhesion. In osteoblast differentiation, mediates the bone morphogenetic protein 2 (BMP2)-induced nuclear export of HDAC7, which results in the inhibition of HDAC7 transcriptional repression of RUNX2. In neurons, plays an important role in neuronal polarity by regulating the biogenesis of TGN-derived dendritic vesicles, and is involved in the maintenance of dendritic arborization and Golgi structure in hippocampal cells. May potentiate mitogenesis induced by the neuropeptide bombesin or vasopressin by mediating an increase in the duration of MAPK1/3 (ERK1/2) signaling, which leads to accumulation of immediate-early gene products including FOS that stimulate cell cycle progression. Plays an important role in the proliferative response induced by low calcium in keratinocytes, through sustained activation of MAPK1/3 (ERK1/2) pathway. Downstream of novel PKC signaling, plays a role in cardiac hypertrophy by phosphorylating HDAC5, which in turn triggers XPO1/CRM1-dependent nuclear export of HDAC5, MEF2A transcriptional activation and induction of downstream target genes that promote myocyte hypertrophy and pathological cardiac remodeling. Mediates cardiac troponin I (TNNI3) phosphorylation at the PKA sites, which results in reduced myofilament calcium sensitivity, and accelerated crossbridge cycling kinetics. The PRKD1-HDAC5 pathway is also involved in angiogenesis by mediating VEGFA-induced specific subset of gene expression, cell migration, and tube formation. In response to VEGFA, is necessary and required for HDAC7 phosphorylation which induces HDAC7 nuclear export and endothelial cell proliferation and migration. During apoptosis induced by cytarabine and other genotoxic agents, PRKD1 is cleaved by caspase-3 at Asp-378, resulting in activation of its kinase function and increased sensitivity of cells to the cytotoxic effects of genotoxic agents. In epithelial cells, is required for transducing flagellin-stimulated inflammatory responses by binding and phosphorylating TLR5, which contributes to MAPK14/p38 activation and production of inflammatory cytokines. Acts as an activator of NLRP3 inflammasome assembly by mediating phosphorylation of NLRP3. May play a role in inflammatory response by mediating activation of NF-kappa-B. May be involved in pain transmission by directly modulating TRPV1 receptor. Plays a role in activated KRAS-mediated stabilization of ZNF304 in colorectal cancer (CRC) cells. Regulates nuclear translocation of transcription factor TFEB in macrophages upon live S.enterica infection. The protein is Serine/threonine-protein kinase D1 (PRKD1) of Homo sapiens (Human).